The primary structure comprises 203 residues: Peptidyl-tRNA hydrolase (203 aa).

A tRNA-binding site is contributed by Tyr14. Residue His19 is the Proton acceptor of the active site. TRNA-binding residues include Tyr64, Asn66, and Asn112.

Belongs to the PTH family. Monomer.

Its subcellular location is the cytoplasm. The catalysed reaction is an N-acyl-L-alpha-aminoacyl-tRNA + H2O = an N-acyl-L-amino acid + a tRNA + H(+). Its function is as follows. Hydrolyzes ribosome-free peptidyl-tRNAs (with 1 or more amino acids incorporated), which drop off the ribosome during protein synthesis, or as a result of ribosome stalling. In terms of biological role, catalyzes the release of premature peptidyl moieties from peptidyl-tRNA molecules trapped in stalled 50S ribosomal subunits, and thus maintains levels of free tRNAs and 50S ribosomes. The sequence is that of Peptidyl-tRNA hydrolase from Methylobacterium sp. (strain 4-46).